Here is a 368-residue protein sequence, read N- to C-terminus: Phospho-N-acetylmuramoyl-pentapeptide-transferase (368 aa).

Transmembrane regions (helical) follow at residues 2 to 22 (IALIIGMLVSLIVTLVGTPLL), 51 to 71 (TLGGVVINFAILLGWASSALY), 80 to 100 (PSWSAALVLFAMLSMGLLGFI), 117 to 137 (GGKFIGQFIFATIYAVLALLI), 167 to 187 (VAIILFVIWVNFLMTAWTNAV), 193 to 213 (LDGLAAGSSMIAFTGFGIIAF), 234 to 254 (PLDLTVIAVCAAVACFGFLWY), 271 to 291 (LGGLFAALSIATHTEFLAVVL), and 340 to 360 (FWMIELIFVLLALTIFYGDWV).

Belongs to the glycosyltransferase 4 family. MraY subfamily. Requires Mg(2+) as cofactor.

The protein localises to the cell membrane. The catalysed reaction is UDP-N-acetyl-alpha-D-muramoyl-L-alanyl-gamma-D-glutamyl-meso-2,6-diaminopimeloyl-D-alanyl-D-alanine + di-trans,octa-cis-undecaprenyl phosphate = di-trans,octa-cis-undecaprenyl diphospho-N-acetyl-alpha-D-muramoyl-L-alanyl-D-glutamyl-meso-2,6-diaminopimeloyl-D-alanyl-D-alanine + UMP. Its pathway is cell wall biogenesis; peptidoglycan biosynthesis. In terms of biological role, catalyzes the initial step of the lipid cycle reactions in the biosynthesis of the cell wall peptidoglycan: transfers peptidoglycan precursor phospho-MurNAc-pentapeptide from UDP-MurNAc-pentapeptide onto the lipid carrier undecaprenyl phosphate, yielding undecaprenyl-pyrophosphoryl-MurNAc-pentapeptide, known as lipid I. The chain is Phospho-N-acetylmuramoyl-pentapeptide-transferase from Bifidobacterium longum (strain DJO10A).